Here is a 298-residue protein sequence, read N- to C-terminus: Ribosomal RNA small subunit methyltransferase H (298 aa).

Residues G37–H39, D57, L91, D105, and Q112 contribute to the S-adenosyl-L-methionine site.

The protein belongs to the methyltransferase superfamily. RsmH family.

It localises to the cytoplasm. The catalysed reaction is cytidine(1402) in 16S rRNA + S-adenosyl-L-methionine = N(4)-methylcytidine(1402) in 16S rRNA + S-adenosyl-L-homocysteine + H(+). Its function is as follows. Specifically methylates the N4 position of cytidine in position 1402 (C1402) of 16S rRNA. The polypeptide is Ribosomal RNA small subunit methyltransferase H (Kosmotoga olearia (strain ATCC BAA-1733 / DSM 21960 / TBF 19.5.1)).